The primary structure comprises 455 residues: Phosphoglucosamine mutase (455 aa).

Catalysis depends on Ser-104, which acts as the Phosphoserine intermediate. The Mg(2+) site is built by Ser-104, Asp-253, Asp-255, and Asp-257. Ser-104 bears the Phosphoserine mark.

The protein belongs to the phosphohexose mutase family. Requires Mg(2+) as cofactor. Post-translationally, activated by phosphorylation.

It catalyses the reaction alpha-D-glucosamine 1-phosphate = D-glucosamine 6-phosphate. Functionally, catalyzes the conversion of glucosamine-6-phosphate to glucosamine-1-phosphate. The polypeptide is Phosphoglucosamine mutase (Psychrobacter arcticus (strain DSM 17307 / VKM B-2377 / 273-4)).